A 264-amino-acid polypeptide reads, in one-letter code: Major prion protein 1 (264 aa).

A signal peptide spans 1 to 24; it reads MVKSHIGSWILVLFVAMWSDVALC. An interaction with GRB2, ERI3 and SYN1 region spans residues 25 to 241; the sequence is KKRPKPGGGW…ESEAYYQRGA (217 aa). The segment at 28–118 is disordered; it reads PKPGGGWNTG…QWNKPSKPKT (91 aa). A run of 6 repeats spans residues 54-62, 63-70, 71-78, 79-86, 87-94, and 95-103. A 6 X 8 AA tandem repeats of P-H-G-G-G-W-G-Q region spans residues 54–103; the sequence is SQGGGGWGQPHGGGWGQPHGGGWGQPHGGGWGQPHGGGWGQPHGGGGWGQ. A compositionally biased stretch (gly residues) spans 55-107; sequence QGGGGWGQPHGGGWGQPHGGGWGQPHGGGWGQPHGGGWGQPHGGGGWGQGGTH. Cu(2+) contacts are provided by histidine 72, glycine 73, glycine 74, histidine 80, glycine 81, glycine 82, histidine 88, glycine 89, glycine 90, histidine 96, glycine 98, and glycine 99. Cysteine 190 and cysteine 225 are joined by a disulfide. Residues asparagine 192 and asparagine 208 are each glycosylated (N-linked (GlcNAc...) asparagine). Alanine 241 carries the GPI-anchor amidated alanine lipid modification. A propeptide spans 242–264 (removed in mature form); the sequence is SVILFSSPPVILLISFLIFLIVG.

The protein belongs to the prion family. Monomer and homodimer. Has a tendency to aggregate into amyloid fibrils containing a cross-beta spine, formed by a steric zipper of superposed beta-strands. Soluble oligomers may represent an intermediate stage on the path to fibril formation. Copper binding may promote oligomerization. Interacts with GRB2, APP, ERI3/PRNPIP and SYN1. Mislocalized cytosolically exposed PrP interacts with MGRN1; this interaction alters MGRN1 subcellular location and causes lysosomal enlargement. Interacts with KIAA1191.

The protein resides in the cell membrane. Its subcellular location is the golgi apparatus. In terms of biological role, its primary physiological function is unclear. Has cytoprotective activity against internal or environmental stresses. May play a role in neuronal development and synaptic plasticity. May be required for neuronal myelin sheath maintenance. May play a role in iron uptake and iron homeostasis. Soluble oligomers are toxic to cultured neuroblastoma cells and induce apoptosis (in vitro). Association with GPC1 (via its heparan sulfate chains) targets PRNP to lipid rafts. Also provides Cu(2+) or Zn(2+) for the ascorbate-mediated GPC1 deaminase degradation of its heparan sulfate side chains. This Tragelaphus strepsiceros (Greater kudu) protein is Major prion protein 1.